The primary structure comprises 443 residues: ATP-dependent protease ATPase subunit HslU (443 aa).

ATP is bound by residues Ile18 and 60–65 (GVGKTE). The disordered stretch occupies residues 138–158 (PAENQWGEKEQNEDKGTRQTF). Over residues 143 to 154 (WGEKEQNEDKGT) the composition is skewed to basic and acidic residues. Positions 255, 321, and 393 each coordinate ATP.

Belongs to the ClpX chaperone family. HslU subfamily. As to quaternary structure, a double ring-shaped homohexamer of HslV is capped on each side by a ring-shaped HslU homohexamer. The assembly of the HslU/HslV complex is dependent on binding of ATP.

The protein localises to the cytoplasm. In terms of biological role, ATPase subunit of a proteasome-like degradation complex; this subunit has chaperone activity. The binding of ATP and its subsequent hydrolysis by HslU are essential for unfolding of protein substrates subsequently hydrolyzed by HslV. HslU recognizes the N-terminal part of its protein substrates and unfolds these before they are guided to HslV for hydrolysis. This chain is ATP-dependent protease ATPase subunit HslU, found in Pseudoalteromonas atlantica (strain T6c / ATCC BAA-1087).